Here is a 388-residue protein sequence, read N- to C-terminus: Putative F-box protein At3g49520 (388 aa).

Residues 1-47 (MTTISDLPYDLVKEIFSWVPFTSLRAVRSTCKTWNALSKNQIFGKKS) enclose the F-box domain.

This is Putative F-box protein At3g49520 from Arabidopsis thaliana (Mouse-ear cress).